The sequence spans 131 residues: D-ribose pyranase (131 aa).

Residue His20 is the Proton donor of the active site. Residues Asp28, His98, and 120–122 each bind substrate; that span reads YSN.

The protein belongs to the RbsD / FucU family. RbsD subfamily. In terms of assembly, homodecamer.

The protein resides in the cytoplasm. The catalysed reaction is beta-D-ribopyranose = beta-D-ribofuranose. Its pathway is carbohydrate metabolism; D-ribose degradation; D-ribose 5-phosphate from beta-D-ribopyranose: step 1/2. Catalyzes the interconversion of beta-pyran and beta-furan forms of D-ribose. This is D-ribose pyranase from Pediococcus pentosaceus (strain ATCC 25745 / CCUG 21536 / LMG 10740 / 183-1w).